The primary structure comprises 165 residues: uncharacterized protein (165 aa).

This is an uncharacterized protein from Aquifex aeolicus (strain VF5).